The sequence spans 246 residues: 3-deoxy-manno-octulosonate cytidylyltransferase (246 aa).

The protein belongs to the KdsB family.

It localises to the cytoplasm. It carries out the reaction 3-deoxy-alpha-D-manno-oct-2-ulosonate + CTP = CMP-3-deoxy-beta-D-manno-octulosonate + diphosphate. Its pathway is nucleotide-sugar biosynthesis; CMP-3-deoxy-D-manno-octulosonate biosynthesis; CMP-3-deoxy-D-manno-octulosonate from 3-deoxy-D-manno-octulosonate and CTP: step 1/1. It functions in the pathway bacterial outer membrane biogenesis; lipopolysaccharide biosynthesis. Its function is as follows. Activates KDO (a required 8-carbon sugar) for incorporation into bacterial lipopolysaccharide in Gram-negative bacteria. This chain is 3-deoxy-manno-octulosonate cytidylyltransferase, found in Paramagnetospirillum magneticum (strain ATCC 700264 / AMB-1) (Magnetospirillum magneticum).